The primary structure comprises 282 residues: Pantothenate synthetase (282 aa).

An ATP-binding site is contributed by 30–37 (MGYLHEGH). The Proton donor role is filled by H37. Residue Q61 coordinates (R)-pantoate. A beta-alanine-binding site is contributed by Q61. Residue 147-150 (GMKD) participates in ATP binding. Residue Q153 participates in (R)-pantoate binding. Residues V176 and 184 to 187 (KSSR) each bind ATP.

This sequence belongs to the pantothenate synthetase family. In terms of assembly, homodimer.

The protein localises to the cytoplasm. It catalyses the reaction (R)-pantoate + beta-alanine + ATP = (R)-pantothenate + AMP + diphosphate + H(+). It functions in the pathway cofactor biosynthesis; (R)-pantothenate biosynthesis; (R)-pantothenate from (R)-pantoate and beta-alanine: step 1/1. Functionally, catalyzes the condensation of pantoate with beta-alanine in an ATP-dependent reaction via a pantoyl-adenylate intermediate. The sequence is that of Pantothenate synthetase from Bacillus cereus (strain ATCC 14579 / DSM 31 / CCUG 7414 / JCM 2152 / NBRC 15305 / NCIMB 9373 / NCTC 2599 / NRRL B-3711).